We begin with the raw amino-acid sequence, 460 residues long: Protein unc-93 homolog A (460 aa).

The next 5 helical transmembrane spans lie at 7–27 (ILIV…LQSL), 41–61 (SLSV…PIVI), 68–88 (WTIV…FYAS), 89–109 (WYTL…LWAA), and 139–159 (LFFL…SLIF). N-linked (GlcNAc...) asparagine glycans are attached at residues Asn-168 and Asn-189. 6 consecutive transmembrane segments (helical) span residues 203–223 (TLLG…AVFL), 292–312 (FVGY…LLFG), 321–341 (ICLF…LLLW), 345–365 (PNDF…DAIW), 390–410 (LWES…CVSV), and 412–432 (LYIL…VEYL).

Belongs to the unc-93 family.

Its subcellular location is the membrane. The chain is Protein unc-93 homolog A (unc93a) from Xenopus laevis (African clawed frog).